Reading from the N-terminus, the 511-residue chain is Exodeoxyribonuclease 7 large subunit (511 aa).

The protein belongs to the XseA family. In terms of assembly, heterooligomer composed of large and small subunits.

It localises to the cytoplasm. It carries out the reaction Exonucleolytic cleavage in either 5'- to 3'- or 3'- to 5'-direction to yield nucleoside 5'-phosphates.. Functionally, bidirectionally degrades single-stranded DNA into large acid-insoluble oligonucleotides, which are then degraded further into small acid-soluble oligonucleotides. The protein is Exodeoxyribonuclease 7 large subunit of Brucella canis (strain ATCC 23365 / NCTC 10854 / RM-666).